A 344-amino-acid chain; its full sequence is Lipase chaperone (344 aa).

Residues 14–34 traverse the membrane as a helical segment; that stretch reads AVVYGAVGLAAIAGVAMWSGA. Positions 37–78 are disordered; it reads HGGTGASGEPPDASAARGPAAAPPQAAVPASTSLPPSLAGSS. Residues 43–78 are compositionally biased toward low complexity; it reads SGEPPDASAARGPAAAPPQAAVPASTSLPPSLAGSS.

Belongs to the lipase chaperone family.

Its subcellular location is the cell inner membrane. In terms of biological role, may be involved in the folding of the extracellular lipase during its passage through the periplasm. The sequence is that of Lipase chaperone (lifO) from Burkholderia cepacia (Pseudomonas cepacia).